Here is a 518-residue protein sequence, read N- to C-terminus: Glutamate--cysteine ligase (518 aa).

The protein belongs to the glutamate--cysteine ligase type 1 family. Type 1 subfamily.

The enzyme catalyses L-cysteine + L-glutamate + ATP = gamma-L-glutamyl-L-cysteine + ADP + phosphate + H(+). It functions in the pathway sulfur metabolism; glutathione biosynthesis; glutathione from L-cysteine and L-glutamate: step 1/2. The sequence is that of Glutamate--cysteine ligase from Shigella dysenteriae serotype 1 (strain Sd197).